We begin with the raw amino-acid sequence, 542 residues long: Thermosome subunit (542 aa).

This sequence belongs to the TCP-1 chaperonin family. As to quaternary structure, forms an oligomeric complex of eight-membered rings.

In terms of biological role, molecular chaperone; binds unfolded polypeptides in vitro, and has a weak ATPase activity. The protein is Thermosome subunit (ths) of Methanocaldococcus jannaschii (strain ATCC 43067 / DSM 2661 / JAL-1 / JCM 10045 / NBRC 100440) (Methanococcus jannaschii).